A 217-amino-acid polypeptide reads, in one-letter code: Large ribosomal subunit protein bL25 (217 aa).

A disordered region spans residues 178–217 (VVAPTEEPTEEEIEAMEGEQQTEEPEVVGESKEDEEKTEE). Residues 184-205 (EPTEEEIEAMEGEQQTEEPEVV) are compositionally biased toward acidic residues. Basic and acidic residues predominate over residues 206–217 (GESKEDEEKTEE).

It belongs to the bacterial ribosomal protein bL25 family. CTC subfamily. In terms of assembly, part of the 50S ribosomal subunit; part of the 5S rRNA/L5/L18/L25 subcomplex. Contacts the 5S rRNA. Binds to the 5S rRNA independently of L5 and L18.

In terms of biological role, this is one of the proteins that binds to the 5S RNA in the ribosome where it forms part of the central protuberance. The chain is Large ribosomal subunit protein bL25 from Staphylococcus aureus (strain MRSA252).